The following is a 403-amino-acid chain: 8-amino-7-oxononanoate synthase (403 aa).

Position 25 (R25) interacts with substrate. 112-113 (GY) is a binding site for pyridoxal 5'-phosphate. H137 is a binding site for substrate. Residues S182, H210, and T239 each contribute to the pyridoxal 5'-phosphate site. The residue at position 242 (K242) is an N6-(pyridoxal phosphate)lysine. Residue T358 coordinates substrate.

Belongs to the class-II pyridoxal-phosphate-dependent aminotransferase family. BioF subfamily. In terms of assembly, homodimer. Pyridoxal 5'-phosphate serves as cofactor.

The catalysed reaction is 6-carboxyhexanoyl-[ACP] + L-alanine + H(+) = (8S)-8-amino-7-oxononanoate + holo-[ACP] + CO2. The protein operates within cofactor biosynthesis; biotin biosynthesis. Catalyzes the decarboxylative condensation of pimeloyl-[acyl-carrier protein] and L-alanine to produce 8-amino-7-oxononanoate (AON), [acyl-carrier protein], and carbon dioxide. This chain is 8-amino-7-oxononanoate synthase, found in Marinomonas sp. (strain MWYL1).